Consider the following 758-residue polypeptide: 3-isopropylmalate dehydratase (758 aa).

The [4Fe-4S] cluster site is built by Cys359, Cys420, and Cys423. Residues Ser486 and Ser488 each carry the phosphoserine modification.

Belongs to the aconitase/IPM isomerase family. [4Fe-4S] cluster is required as a cofactor.

The catalysed reaction is (2R,3S)-3-isopropylmalate = (2S)-2-isopropylmalate. It participates in amino-acid biosynthesis; L-leucine biosynthesis; L-leucine from 3-methyl-2-oxobutanoate: step 2/4. Catalyzes the isomerization between 2-isopropylmalate and 3-isopropylmalate, via the formation of 2-isopropylmaleate. This Schizosaccharomyces pombe (strain 972 / ATCC 24843) (Fission yeast) protein is 3-isopropylmalate dehydratase (leu2).